Consider the following 141-residue polypeptide: MAKKGAGATRGVSAVRPTRALPVGAYLTVADNSGAKVIQIIGVVEYHGTRRRLASAGVGDMVVATVKKGRPDMRHQVVRAVIIRQRKEYRRLDGMRVKFEDNAAVIVTPEGVPRGTEIRGPVAREAAERWVRIGSIASIIV.

It belongs to the universal ribosomal protein uL14 family. As to quaternary structure, part of the 50S ribosomal subunit. Forms a cluster with proteins L3 and L24e, part of which may contact the 16S rRNA in 2 intersubunit bridges.

In terms of biological role, binds to 23S rRNA. Forms part of two intersubunit bridges in the 70S ribosome. This Pyrococcus furiosus (strain ATCC 43587 / DSM 3638 / JCM 8422 / Vc1) protein is Large ribosomal subunit protein uL14.